Reading from the N-terminus, the 178-residue chain is Large ribosomal subunit protein uL6 (178 aa).

It belongs to the universal ribosomal protein uL6 family. Part of the 50S ribosomal subunit.

In terms of biological role, this protein binds to the 23S rRNA, and is important in its secondary structure. It is located near the subunit interface in the base of the L7/L12 stalk, and near the tRNA binding site of the peptidyltransferase center. This Nautilia profundicola (strain ATCC BAA-1463 / DSM 18972 / AmH) protein is Large ribosomal subunit protein uL6.